A 72-amino-acid chain; its full sequence is Translation initiation factor IF-1 (72 aa).

Residues 1 to 72 (MARDDVIEVD…DRGRITFRYK (72 aa)) enclose the S1-like domain.

The protein belongs to the IF-1 family. In terms of assembly, component of the 30S ribosomal translation pre-initiation complex which assembles on the 30S ribosome in the order IF-2 and IF-3, IF-1 and N-formylmethionyl-tRNA(fMet); mRNA recruitment can occur at any time during PIC assembly.

It localises to the cytoplasm. Its function is as follows. One of the essential components for the initiation of protein synthesis. Stabilizes the binding of IF-2 and IF-3 on the 30S subunit to which N-formylmethionyl-tRNA(fMet) subsequently binds. Helps modulate mRNA selection, yielding the 30S pre-initiation complex (PIC). Upon addition of the 50S ribosomal subunit IF-1, IF-2 and IF-3 are released leaving the mature 70S translation initiation complex. This chain is Translation initiation factor IF-1, found in Helicobacter acinonychis (strain Sheeba).